A 55-amino-acid polypeptide reads, in one-letter code: Small ribosomal subunit protein eS31 (55 aa).

C21, C24, C39, and C42 together coordinate Zn(2+). The C4-type zinc-finger motif lies at 21 to 42; the sequence is CPRCGPGVFLAEHADRFTCGRC.

Belongs to the eukaryotic ribosomal protein eS31 family. Part of the 30S ribosomal subunit. Zn(2+) is required as a cofactor.

The polypeptide is Small ribosomal subunit protein eS31 (Thermoplasma volcanium (strain ATCC 51530 / DSM 4299 / JCM 9571 / NBRC 15438 / GSS1)).